A 180-amino-acid polypeptide reads, in one-letter code: VDDTSTPVRAILADQGTHHAHLELLDNLHAAGWLAALSRPVPGSALADADQEAAMLLIRAHATGRPLLPETQPDPLETLLETDEARAAARTLLGPLAGNDSTSRTLRTTLRAWLAHHGSWDRTAADLGAHRNSVRYRISRIERDLGIDLSDPEQRMRMWFALSRFPDDTPTHPTQRDISR.

It belongs to the CdaR family.

This is an uncharacterized protein from Thermomonospora curvata.